Here is a 671-residue protein sequence, read N- to C-terminus: DNA ligase (671 aa).

Residues 34 to 38 (DAEYD), 83 to 84 (SL), and Glu-115 contribute to the NAD(+) site. The active-site N6-AMP-lysine intermediate is the Lys-117. Arg-138, Glu-174, Lys-291, and Lys-315 together coordinate NAD(+). The Zn(2+) site is built by Cys-409, Cys-412, Cys-427, and Cys-432. Residues 589–671 (RSGGPLTGKS…LQMIDTLEEA (83 aa)) enclose the BRCT domain.

It belongs to the NAD-dependent DNA ligase family. LigA subfamily. It depends on Mg(2+) as a cofactor. Mn(2+) is required as a cofactor.

It carries out the reaction NAD(+) + (deoxyribonucleotide)n-3'-hydroxyl + 5'-phospho-(deoxyribonucleotide)m = (deoxyribonucleotide)n+m + AMP + beta-nicotinamide D-nucleotide.. Its function is as follows. DNA ligase that catalyzes the formation of phosphodiester linkages between 5'-phosphoryl and 3'-hydroxyl groups in double-stranded DNA using NAD as a coenzyme and as the energy source for the reaction. It is essential for DNA replication and repair of damaged DNA. The protein is DNA ligase of Syntrophotalea carbinolica (strain DSM 2380 / NBRC 103641 / GraBd1) (Pelobacter carbinolicus).